The primary structure comprises 225 residues: uncharacterized protein (225 aa).

N48, N58, N105, and N108 each carry an N-linked (GlcNAc...) asparagine; by host glycan. Residues 156 to 178 (LWGYLKQPLVMVGIAAVVGYLIY) form a helical membrane-spanning segment.

This sequence belongs to the ascovirus HvAv ORF58 family.

The protein localises to the membrane. This is an uncharacterized protein from Heliothis virescens ascovirus 3e (HvAV-3e).